The following is a 155-amino-acid chain: UPF0461 protein C5orf24 homolog (155 aa).

A compositionally biased stretch (polar residues) spans 60-69 (NETHLQTSTS). The interval 60 to 155 (NETHLQTSTS…QQALMCSSDA (96 aa)) is disordered. A compositionally biased stretch (basic residues) spans 78-92 (LKKKKNVGRSGKRGR). Residues 94 to 107 (SGTTKSAGYRTSTG) are compositionally biased toward polar residues.

This sequence belongs to the UPF0461 family.

The chain is UPF0461 protein C5orf24 homolog from Xenopus laevis (African clawed frog).